A 289-amino-acid polypeptide reads, in one-letter code: Protease HtpX homolog (289 aa).

Transmembrane regions (helical) follow at residues 9–29 (TGVL…LIGG) and 31–51 (GGMI…YWFS). H133 lines the Zn(2+) pocket. Residue E134 is part of the active site. Residue H137 coordinates Zn(2+). A run of 2 helical transmembrane segments spans residues 143-163 (TLIQ…VDFA) and 182-202 (IGLI…QLAI). E207 contacts Zn(2+).

Belongs to the peptidase M48B family. Zn(2+) serves as cofactor.

It is found in the cell membrane. The sequence is that of Protease HtpX homolog from Pyrococcus abyssi (strain GE5 / Orsay).